We begin with the raw amino-acid sequence, 79 residues long: Probable [Fe-S]-dependent transcriptional repressor (79 aa).

C56, C61, C64, and C71 together coordinate iron-sulfur cluster.

This sequence belongs to the FeoC family.

Its function is as follows. May function as a transcriptional regulator that controls feoABC expression. The sequence is that of Probable [Fe-S]-dependent transcriptional repressor from Klebsiella pneumoniae subsp. pneumoniae (strain ATCC 700721 / MGH 78578).